The sequence spans 480 residues: Cysteine--tRNA ligase (480 aa).

Cysteine 27 is a binding site for Zn(2+). Residues 29–39 (PTVYNYAHIGN) carry the 'HIGH' region motif. The Zn(2+) site is built by cysteine 221, histidine 246, and glutamate 250. The short motif at 278–282 (KMSKS) is the 'KMSKS' region element. Lysine 281 provides a ligand contact to ATP.

The protein belongs to the class-I aminoacyl-tRNA synthetase family. As to quaternary structure, monomer. Zn(2+) serves as cofactor.

The protein resides in the cytoplasm. The catalysed reaction is tRNA(Cys) + L-cysteine + ATP = L-cysteinyl-tRNA(Cys) + AMP + diphosphate. This is Cysteine--tRNA ligase from Borreliella afzelii (strain PKo) (Borrelia afzelii).